A 522-amino-acid polypeptide reads, in one-letter code: MSTLQDFQIAPAILHRVTVRDASAILFCTLLTVFLFISQGTVRGVKRVGKSRLRTLVTGETPLRFDLEKYGYLGYQQFSKKANKPFLVKIYGLDHYVLPVKYLDSLKTVDHHRLSFAQSLNDFLNVDASLGDLVTHSDMEIAVVTKHLNPRLTTLTPVLVDEANFAFEKELGKLETWKTVNALFLSAFLTNRTSGRVLVGDLCRDDNYLHAMMKYTESVFSSGVAFNGIPLGPFRKIVYYLGARQHRRDLDNAAALVLPEIKRRMAAQAEDPNCRKENDAIQWNLDLPLASPKEGLPLRHAHRVLHLSFAATGTVAILITHMIYNVLMYPEYLEPLREEVMACTKAHGGWTEKAMNEMWKLDSFIRETLRVQPPSVFTAYRTVKNQPFTFPDGFTLPVGSRITFPTLPVGLDPENYESASEFDGFRFFRKREEARLAKKAYNWGATKIDSSFLPFGYGNQACPGRFFGVRKTKILFGKLINDYDFSWAEPRSARPENIVIEGQILVNPTPEIKIKSRVAAGM.

Residues Ala22–Val42 traverse the membrane as a helical segment. An N-linked (GlcNAc...) asparagine glycan is attached at Asn191. Residues Val304–Tyr324 traverse the membrane as a helical segment. Cys462 contributes to the heme binding site.

It belongs to the cytochrome P450 family. It depends on heme as a cofactor.

The protein localises to the membrane. It participates in mycotoxin biosynthesis. Functionally, cytochrome P450 monooxygenase; part of the gene cluster that mediates the biosynthesis of sirodesmin PL, an epipolythiodioxopiperazine (ETP) characterized by a disulfide bridged cyclic dipeptide and that acts as a phytotoxin which is involved in the blackleg didease of canola. SirD catalyzes the O-prenylation of L-tyrosine (L-Tyr) in the presence of dimethylallyl diphosphate (DMAPP) to yield 4-O-dimethylallyl-L-Tyr, and therefore represents probably the first pathway-specific enzyme in the biosynthesis of sirodesmin PL. 4-O-dimethylallyl-L-Tyr, then undergoes condensation with L-Ser in a reaction catalyzed by the non-ribosomal peptide synthase sirP to form the diketopiperazine (DKP) backbone. Further bishydroxylation of the DKP performed by the cytochrome P450 monooxygenase sirC leads to the production of the intermediate phomamide. This step is essential to form the reactive thiol group required for toxicity of sirodesmin PL. The next steps of sirodesmin biosynthesis are not well understood yet, but some predictions could be made from intermediate compounds identification. Phomamide is converted into phomalizarine via oxidation, probably by sirT. Further oxidation, methylation (by sirM or sirN) and reduction steps convert phomalizarine to deacetyl sirodesmin. Finally, acetyltransferase sirH probably acetylates deacetyl sirodesmin to produce sirodesmin PL. This is Cytochrome P450 monooxygenase sirB from Leptosphaeria maculans (Blackleg fungus).